We begin with the raw amino-acid sequence, 200 residues long: H-2 class I histocompatibility antigen, Q9 alpha chain (200 aa).

A signal peptide spans 1–21; it reads MALTMLLLLVAAALTLIETRA. Residues 22–111 form an alpha-1 region; the sequence is GQHSLQYFHT…AQSYYNQSKG (90 aa). The Extracellular segment spans residues 22–200; it reads GQHSLQYFHT…RYLELGKETL (179 aa). A glycan (N-linked (GlcNAc...) asparagine) is linked at N107. Residues 112–200 form an alpha-2 region; that stretch reads GSHTLQWMYG…RYLELGKETL (89 aa). Cysteines 122 and 185 form a disulfide.

This sequence belongs to the MHC class I family. As to quaternary structure, heterodimer of an alpha chain and a beta chain (beta-2-microglobulin).

The protein resides in the membrane. In terms of biological role, involved in the presentation of foreign antigens to the immune system. The sequence is that of H-2 class I histocompatibility antigen, Q9 alpha chain (H2-Q9) from Mus musculus (Mouse).